The sequence spans 438 residues: Serine/threonine-protein kinase VIK (438 aa).

A disordered region spans residues 1–31 (MSSDSPAAGDGGEQAAAGTSVPSPSYDKQKE). ANK repeat units follow at residues 36–65 (SRTS…TLVH), 70–99 (DKRT…DVNA), and 103–133 (WKNT…SYGQ). Positions 162–427 (FSNAAMIGKG…KRLEKIKETL (266 aa)) constitute a Protein kinase domain. Residues 168 to 176 (IGKGSFGEI) and Lys-189 each bind ATP. Asp-285 acts as the Proton acceptor in catalysis.

This sequence belongs to the protein kinase superfamily. Ser/Thr protein kinase family. In terms of assembly, interacts with BRL2. Binds to MSSP1/TMT1 at the tonoplast. Phosphorylated. Restricted to mature vascular cells. Mostly expressed in mature leaves and seeds, and, to a lower level, in seedlings, young leaves, flowers and siliques.

The protein resides in the vacuole. The enzyme catalyses L-seryl-[protein] + ATP = O-phospho-L-seryl-[protein] + ADP + H(+). The catalysed reaction is L-threonyl-[protein] + ATP = O-phospho-L-threonyl-[protein] + ADP + H(+). Serine/threonine protein kinase which may function as an adapter protein for BRL2. Required during vascular development for the establishment of vein pattern in foliar organs. Mediates MSSP1/TMT1 phosphorylation and activation to enhance its carrier activity and consequently vacuolar sugar accumulation, particularly in response to cold. This chain is Serine/threonine-protein kinase VIK, found in Arabidopsis thaliana (Mouse-ear cress).